The chain runs to 91 residues: UPF0386 protein Caul_4643 (91 aa).

It belongs to the UPF0386 family.

The chain is UPF0386 protein Caul_4643 from Caulobacter sp. (strain K31).